A 305-amino-acid chain; its full sequence is Ribosomal RNA small subunit methyltransferase H (305 aa).

S-adenosyl-L-methionine-binding positions include glycine 33–histidine 35, aspartate 52, aspartate 97, and glutamine 104.

This sequence belongs to the methyltransferase superfamily. RsmH family.

The protein resides in the cytoplasm. It catalyses the reaction cytidine(1402) in 16S rRNA + S-adenosyl-L-methionine = N(4)-methylcytidine(1402) in 16S rRNA + S-adenosyl-L-homocysteine + H(+). In terms of biological role, specifically methylates the N4 position of cytidine in position 1402 (C1402) of 16S rRNA. The chain is Ribosomal RNA small subunit methyltransferase H from Campylobacter lari (strain RM2100 / D67 / ATCC BAA-1060).